The chain runs to 82 residues: Small ribosomal subunit protein uS17 (82 aa).

It belongs to the universal ribosomal protein uS17 family. In terms of assembly, part of the 30S ribosomal subunit.

Functionally, one of the primary rRNA binding proteins, it binds specifically to the 5'-end of 16S ribosomal RNA. This is Small ribosomal subunit protein uS17 from Rhodopseudomonas palustris (strain TIE-1).